Here is a 2020-residue protein sequence, read N- to C-terminus: Metacaspase-2 (2020 aa).

Basic and acidic residues-rich tracts occupy residues 51–60 (SENDRNESIQ) and 69–78 (DNRKTNKSEK). Disordered stretches follow at residues 51–78 (SEND…KSEK) and 573–614 (RNGN…NINN). Positions 576 to 614 (NINNNKNNNINNNNNNINNNNNNINNNNNNINNNNNINN) are enriched in low complexity.

It belongs to the peptidase C14B family.

It localises to the cytoplasm. With respect to regulation, ca(2+) does not appear to affect catalytic activity. Functionally, protease that cleaves specifically after arginine or lysine residues. May play a role in parasite growth and/or development. This chain is Metacaspase-2, found in Plasmodium falciparum (isolate 3D7).